Consider the following 356-residue polypeptide: 1-deoxy-D-xylulose 5-phosphate reductoisomerase (356 aa).

Positions 7, 8, 9, 10, 31, 33, and 111 each coordinate NADPH. Lys112 serves as a coordination point for 1-deoxy-D-xylulose 5-phosphate. Glu113 contacts NADPH. Asp131 lines the Mn(2+) pocket. The 1-deoxy-D-xylulose 5-phosphate site is built by Ser132, Glu133, Ser155, and His178. Glu133 provides a ligand contact to Mn(2+). An NADPH-binding site is contributed by Gly184. Residues Ser191, Asn196, Lys197, and Glu200 each coordinate 1-deoxy-D-xylulose 5-phosphate. Glu200 serves as a coordination point for Mn(2+).

Belongs to the DXR family. Mg(2+) serves as cofactor. It depends on Mn(2+) as a cofactor.

It carries out the reaction 2-C-methyl-D-erythritol 4-phosphate + NADP(+) = 1-deoxy-D-xylulose 5-phosphate + NADPH + H(+). The protein operates within isoprenoid biosynthesis; isopentenyl diphosphate biosynthesis via DXP pathway; isopentenyl diphosphate from 1-deoxy-D-xylulose 5-phosphate: step 1/6. Functionally, catalyzes the NADPH-dependent rearrangement and reduction of 1-deoxy-D-xylulose-5-phosphate (DXP) to 2-C-methyl-D-erythritol 4-phosphate (MEP). The polypeptide is 1-deoxy-D-xylulose 5-phosphate reductoisomerase (Campylobacter jejuni subsp. jejuni serotype O:23/36 (strain 81-176)).